A 367-amino-acid polypeptide reads, in one-letter code: Voltage-gated potassium channel subunit beta-2 (367 aa).

Residues S9, S14, and S20 each carry the phosphoserine modification. The residue at position 28 (R28) is an Asymmetric dimethylarginine; alternate. R28 bears the Omega-N-methylarginine; alternate mark. Phosphoserine is present on S31. Residues T56, W57, Q63, and D85 each coordinate NADP(+). Y90 serves as the catalytic Proton donor/acceptor. Phosphoserine is present on S112. The residue at position 124 (K124) is an N6-acetyllysine. The NADP(+) site is built by N158, S188, R189, Q214, W243, S244, P245, L246, A247, C248, K254, Y262, R264, G323, S325, Q329, E332, and N333.

This sequence belongs to the shaker potassium channel beta subunit family. Homotetramer. Interaction with tetrameric potassium channel alpha subunits gives rise to a heterooctamer. Identified in potassium channel complexes containing KCNA1, KCNA2, KCNA4, KCNA5, KCNA6, KCNAB1, KCNAB2 and KCND3. Interacts (in unphosphorylated form) with MAPRE1. Forms a ternary complex with SQSTM1 and PRKCZ. Phosphorylated by PRKCZ; may be regulated by incorporation in a complex composed of PRKCZ and SQSTM1. In terms of tissue distribution, detected in brain. Detected at basket cell terminals in cerebellum and in the juxtaparanodal region of nodes of Ranvier (at protein level). Strongest expression in brain and eye. Highest levels in brain detected in brainstem and diencephalon. Strong expression also detected in lung and heart. Moderate expression in kidney, T-lymphocytes and skeletal muscle.

Its subcellular location is the cytoplasm. It is found in the membrane. It localises to the cell membrane. The protein localises to the cell projection. The protein resides in the axon. Its subcellular location is the synapse. It is found in the synaptosome. It localises to the cytoskeleton. The enzyme catalyses hydroxyacetone + NADP(+) = methylglyoxal + NADPH + H(+). The catalysed reaction is (E)-4-oxonon-2-en-1-ol + NADP(+) = (E)-4-oxonon-2-enal + NADPH + H(+). Functionally, regulatory subunit of the voltage-gated potassium (Kv) Shaker channel family. Shaker channels are composed of pore-forming and potassium-conducting alpha subunits and of regulatory beta subunits. The beta-2/KCNAB2 subunit promotes potassium channel closure via a mechanism that does not involve physical obstruction of the channel pore. Promotes the inactivation of Kv1.4/KCNA4 and Kv1.5/KCNA5 alpha subunit-containing channels. Displays nicotinamide adenine dinucleotide phosphate (NADPH)-dependent aldoketoreductase activity by catalyzing the NADPH-dependent reduction of a wide range of aldehyde and ketone substrates. Substrate specificity includes methylglyoxal, 9,10-phenanthrenequinone, prostaglandin J2, 4-nitrobenzaldehyde, 4-nitroacetophenone and 4-oxo-trans-2-nonenal (in vitro, no physiological substrate identified yet). The binding of oxidized and reduced nucleotide cofactors alters Kv channel gating and may contribute to dynamic fine tuning of cell excitability. Contributes to the regulation of nerve signaling, and prevents neuronal hyperexcitability. This is Voltage-gated potassium channel subunit beta-2 from Mus musculus (Mouse).